Reading from the N-terminus, the 173-residue chain is Large ribosomal subunit protein uL10 (173 aa).

The protein belongs to the universal ribosomal protein uL10 family. In terms of assembly, part of the ribosomal stalk of the 50S ribosomal subunit. The N-terminus interacts with L11 and the large rRNA to form the base of the stalk. The C-terminus forms an elongated spine to which L12 dimers bind in a sequential fashion forming a multimeric L10(L12)X complex.

In terms of biological role, forms part of the ribosomal stalk, playing a central role in the interaction of the ribosome with GTP-bound translation factors. The protein is Large ribosomal subunit protein uL10 of Micrococcus luteus (strain ATCC 4698 / DSM 20030 / JCM 1464 / CCM 169 / CCUG 5858 / IAM 1056 / NBRC 3333 / NCIMB 9278 / NCTC 2665 / VKM Ac-2230) (Micrococcus lysodeikticus).